The sequence spans 327 residues: UPF0285 protein Maeo_0978 (327 aa).

The protein belongs to the UPF0285 family.

In Methanococcus aeolicus (strain ATCC BAA-1280 / DSM 17508 / OCM 812 / Nankai-3), this protein is UPF0285 protein Maeo_0978.